Reading from the N-terminus, the 234-residue chain is bZIP transcription factor 27 (234 aa).

Residues 152 to 159 (KKRGQDSD) carry the Nuclear localization signal motif. Residues 163-213 (GDRRYKRMIKNRESAARSRARKQAYTNELELEIAHLQTENARLKIQQEQLK) form the bZIP domain. The segment at 165-184 (RRYKRMIKNRESAARSRARK) is basic motif. A leucine-zipper region spans residues 191-212 (LELEIAHLQTENARLKIQQEQL). Thr-231 bears the Phosphothreonine mark.

The protein belongs to the bZIP family. Self-interacts. Interacts with FT and FD/BZIP14. Interacts with CPK33. Phosphorylated. Expressed on the flanks of the shoot apex.

It localises to the nucleus. In terms of biological role, transcription factor required for the transition to flowering promoted by FT. The sequence is that of bZIP transcription factor 27 from Arabidopsis thaliana (Mouse-ear cress).